We begin with the raw amino-acid sequence, 327 residues long: Aldo-keto reductase family 1 member A1 (327 aa).

NADP(+) contacts are provided by residues 13–22, Thr23, Trp24, and Asp47; that span reads GQKIPLIGLG. The Proton donor role is filled by Tyr52. Ser164, Asn165, Ser213, Leu215, Ser217, Lys265, Ser266, Val267, Thr268, Arg271, Gln274, and Asn275 together coordinate NADP(+).

The protein belongs to the aldo/keto reductase family.

The protein localises to the cytoplasm. Its subcellular location is the cytosol. It localises to the apical cell membrane. It catalyses the reaction a primary alcohol + NADP(+) = an aldehyde + NADPH + H(+). It carries out the reaction S-nitroso-CoA + NADPH + H(+) = sulfinamide-CoA + NADP(+). The catalysed reaction is S-nitrosoglutathione + NADPH + H(+) = S-(hydroxysulfenamide)glutathione + NADP(+). Functionally, catalyzes the NADPH-dependent reduction of a wide variety of carbonyl-containing compounds to their corresponding alcohols. Displays enzymatic activity towards endogenous metabolites such as aromatic and aliphatic aldehydes, ketones, monosaccharides and bile acids. Acts as an aldehyde-detoxification enzyme. Also acts as an inhibitor of protein S-nitrosylation by mediating degradation of S-nitroso-coenzyme A (S-nitroso-CoA), a cofactor required to S-nitrosylate proteins. Also acts as a S-nitroso-glutathione reductase by catalyzing the NADPH-dependent reduction of S-nitrosoglutathione. Displays no reductase activity towards retinoids. This Xenopus tropicalis (Western clawed frog) protein is Aldo-keto reductase family 1 member A1 (akr1a1).